The chain runs to 284 residues: Pantothenate synthetase (284 aa).

30–37 (MGALHNGH) is a binding site for ATP. Residue H37 is the Proton donor of the active site. Q61 lines the (R)-pantoate pocket. Residue Q61 participates in beta-alanine binding. 147 to 150 (GEKD) lines the ATP pocket. Q153 provides a ligand contact to (R)-pantoate. Residues L176 and 184 to 187 (SSSR) each bind ATP.

Belongs to the pantothenate synthetase family. Homodimer.

The protein localises to the cytoplasm. The enzyme catalyses (R)-pantoate + beta-alanine + ATP = (R)-pantothenate + AMP + diphosphate + H(+). Its pathway is cofactor biosynthesis; (R)-pantothenate biosynthesis; (R)-pantothenate from (R)-pantoate and beta-alanine: step 1/1. Its function is as follows. Catalyzes the condensation of pantoate with beta-alanine in an ATP-dependent reaction via a pantoyl-adenylate intermediate. The sequence is that of Pantothenate synthetase from Bartonella henselae (strain ATCC 49882 / DSM 28221 / CCUG 30454 / Houston 1) (Rochalimaea henselae).